We begin with the raw amino-acid sequence, 218 residues long: RNA polymerase sigma-H factor (218 aa).

The Polymerase core binding motif lies at 62–75 (DIVQEGMIGLYKSI). A DNA-binding region (H-T-H motif) is located at residues 182 to 201 (YQEISDELNRHVKSIDNALQ).

Belongs to the sigma-70 factor family. Interacts transiently with the RNAP core.

Its function is as follows. Sigma factors are initiation factors that promote the attachment of RNA polymerase (RNAP) to specific initiation sites and are then released. This sigma factor is involved in the transition to post-exponential phase in the beginning of sporulation. It is also required for transcription of several stationary phase genes. Association with the RNAP core increases rapidly in early exponential phase, and reamins constant expression level after. In Bacillus subtilis (strain 168), this protein is RNA polymerase sigma-H factor (sigH).